The sequence spans 132 residues: Small ribosomal subunit protein uS8 (132 aa).

The protein belongs to the universal ribosomal protein uS8 family. As to quaternary structure, part of the 30S ribosomal subunit. Contacts proteins S5 and S12.

One of the primary rRNA binding proteins, it binds directly to 16S rRNA central domain where it helps coordinate assembly of the platform of the 30S subunit. In Bartonella quintana (strain Toulouse) (Rochalimaea quintana), this protein is Small ribosomal subunit protein uS8.